A 473-amino-acid polypeptide reads, in one-letter code: 3-isopropylmalate dehydratase large subunit (473 aa).

Positions 355, 415, and 418 each coordinate [4Fe-4S] cluster. The disordered stretch occupies residues 423–452 (PDQLAPGERSASTSNRNFEGRQGKGGRTHL).

Belongs to the aconitase/IPM isomerase family. LeuC type 1 subfamily. Heterodimer of LeuC and LeuD. It depends on [4Fe-4S] cluster as a cofactor.

It catalyses the reaction (2R,3S)-3-isopropylmalate = (2S)-2-isopropylmalate. It functions in the pathway amino-acid biosynthesis; L-leucine biosynthesis; L-leucine from 3-methyl-2-oxobutanoate: step 2/4. Its function is as follows. Catalyzes the isomerization between 2-isopropylmalate and 3-isopropylmalate, via the formation of 2-isopropylmaleate. The sequence is that of 3-isopropylmalate dehydratase large subunit from Corynebacterium jeikeium (strain K411).